We begin with the raw amino-acid sequence, 75 residues long: MNDNNDNNNNNKNIDNVDDDNDDNDKGKYKGNEFSILEKSLNKLLNNVETFKNYNNQMIESNNKTVDFVHSRFNK.

Residues 1-14 (MNDNNDNNNNNKNI) show a composition bias toward low complexity. The tract at residues 1–30 (MNDNNDNNNNNKNIDNVDDDNDDNDKGKYK) is disordered.

This is an uncharacterized protein from Dictyostelium discoideum (Social amoeba).